Here is a 92-residue protein sequence, read N- to C-terminus: Bombyxin A-7 (92 aa).

Positions 1 to 19 (MKLLLAIALMLTIVMWVST) are cleaved as a signal peptide. Gln-20 carries the post-translational modification Pyrrolidone carboxylic acid. Disulfide bonds link Cys-29–Cys-79, Cys-41–Cys-92, and Cys-78–Cys-83. Positions 50–70 (SDAQYASYGSAWLMPYSEGRG) are cleaved as a propeptide — c peptide like.

It belongs to the insulin family. As to quaternary structure, heterodimer of a B chain and an A chain linked by two disulfide bonds.

It localises to the secreted. Functionally, brain peptide responsible for activation of prothoracic glands to produce ecdysone in insects. This Bombyx mori (Silk moth) protein is Bombyxin A-7 (BBXA7).